A 365-amino-acid chain; its full sequence is tRNA(Met) cytidine acetate ligase (365 aa).

ATP is bound by residues 7–20 (IAEF…HKYL), Gly96, Asn152, and Arg175.

Belongs to the TmcAL family.

It is found in the cytoplasm. It catalyses the reaction cytidine(34) in elongator tRNA(Met) + acetate + ATP = N(4)-acetylcytidine(34) in elongator tRNA(Met) + AMP + diphosphate. In terms of biological role, catalyzes the formation of N(4)-acetylcytidine (ac(4)C) at the wobble position of elongator tRNA(Met), using acetate and ATP as substrates. First activates an acetate ion to form acetyladenylate (Ac-AMP) and then transfers the acetyl group to tRNA to form ac(4)C34. The sequence is that of tRNA(Met) cytidine acetate ligase from Streptococcus pneumoniae (strain P1031).